We begin with the raw amino-acid sequence, 233 residues long: Probable GTP-binding protein EngB (233 aa).

The 187-residue stretch at A23–L209 folds into the EngB-type G domain. GTP-binding positions include G31–S38, G58–H62, D82–G85, T149–D152, and F188–S190. Residues S38 and T60 each contribute to the Mg(2+) site.

It belongs to the TRAFAC class TrmE-Era-EngA-EngB-Septin-like GTPase superfamily. EngB GTPase family. Requires Mg(2+) as cofactor.

Necessary for normal cell division and for the maintenance of normal septation. The sequence is that of Probable GTP-binding protein EngB from Ralstonia pickettii (strain 12J).